The sequence spans 447 residues: Phosphoglucosamine mutase (447 aa).

Serine 100 serves as the catalytic Phosphoserine intermediate. Mg(2+)-binding residues include serine 100, aspartate 239, aspartate 241, and aspartate 243. Serine 100 is modified (phosphoserine).

This sequence belongs to the phosphohexose mutase family. Mg(2+) is required as a cofactor. Activated by phosphorylation.

The enzyme catalyses alpha-D-glucosamine 1-phosphate = D-glucosamine 6-phosphate. Catalyzes the conversion of glucosamine-6-phosphate to glucosamine-1-phosphate. In Halalkalibacterium halodurans (strain ATCC BAA-125 / DSM 18197 / FERM 7344 / JCM 9153 / C-125) (Bacillus halodurans), this protein is Phosphoglucosamine mutase.